The chain runs to 189 residues: MAMAAAASLLPASAAPTLPGRAFRPPRNSTPTASLSCDGGSRCRGVGLGVILGGCRAQGVRRNAAAETYVPGSGKYIAPDYLVKKVTAKELEELVRGERKVPLIVDFYATWCGPCVLMAQDIEMLAVEYENNALFVKVDTDDEYELARDMQVRGLPTLYFFSPDQSKDALRTEGLIPIDMIRNIIDNEL.

The transit peptide at 1–56 (MAMAAAASLLPASAAPTLPGRAFRPPRNSTPTASLSCDGGSRCRGVGLGVILGGCR) directs the protein to the chloroplast. The Thioredoxin domain occupies 72–189 (GSGKYIAPDY…MIRNIIDNEL (118 aa)). Active-site nucleophile residues include Cys-112 and Cys-115. The cysteines at positions 112 and 115 are disulfide-linked.

This sequence belongs to the thioredoxin family. Plant CITRX-type subfamily.

The protein resides in the plastid. Its subcellular location is the chloroplast. In terms of biological role, probable thiol-disulfide oxidoreductase that may play a role in proper chloroplast development. The sequence is that of Thioredoxin-like protein CITRX, chloroplastic from Oryza sativa subsp. japonica (Rice).